Reading from the N-terminus, the 331-residue chain is UPF0194 membrane protein Ent638_1286 (331 aa).

Residues 1 to 16 form the signal peptide; the sequence is MKKPVVVILAVVVLLA. A coiled-coil region spans residues 107–208; sequence EEVAQAEAAV…LDLHDTTLIA (102 aa).

Belongs to the UPF0194 family.

The protein localises to the periplasm. The polypeptide is UPF0194 membrane protein Ent638_1286 (Enterobacter sp. (strain 638)).